A 4540-amino-acid chain; its full sequence is Dynein heavy chain, cytoplasmic (4540 aa).

Residues 1-1796 form a stem region; it reads MEESETQLNV…LIQMGNAQFH (1796 aa). 6 coiled-coil regions span residues 440-482, 698-722, 794-827, 975-995, 1169-1251, and 1295-1311; these read EHIK…NVQQ, RVNY…KTKV, VKKF…AMKT, QQLI…MEQY, RSKK…LKMD, and QNKK…KQLN. 4 AAA regions span residues 1797–2018, 2091–2348, 2457–2705, and 2796–3056; these read YGFE…VLNS, KELA…FTRI, EIDP…WKYA, and QFNE…AKRF. Residues 1835-1842, 2129-2136, 2496-2503, and 2834-2841 each bind ATP; these read GPAGTGKT, GPCGCGKS, GPPGSGKT, and GSSGVGKT. Coiled-coil stretches lie at residues 3076-3182, 3289-3367, 3653-3688, and 3820-3851; these read NEKK…NAKQ, QLKY…RSQA, EDEK…VMNT, and QQLK…RWLN. Positions 3076 to 3367 are stalk; sequence NEKKSQLEDQ…VQEKVTRSQA (292 aa). The disordered stretch occupies residues 3140–3159; it reads KKKEDSTRLSSDAEKKAKEM. An AAA 5 region spans residues 3444-3673; the sequence is LSRPSDRLNW…LKKEAAVIVQ (230 aa). The tract at residues 3908 to 4123 is AAA 6; the sequence is ARKLINQILG…QRCSLDLIDE (216 aa). Coiled-coil stretches lie at residues 4238 to 4259 and 4313 to 4342; these read QKLI…TQIE and RFLD…LAQG.

Belongs to the dynein heavy chain family. In terms of assembly, consists of at least two heavy chains and a number of intermediate and light chains.

It is found in the cytoplasm. It localises to the cytoskeleton. Its function is as follows. Cytoplasmic dynein acts as a motor for the intracellular retrograde motility of vesicles and organelles along microtubules. Dynein has ATPase activity; the force-producing power stroke is thought to occur on release of ADP. The protein is Dynein heavy chain, cytoplasmic (DHC-8) of Paramecium tetraurelia.